Consider the following 182-residue polypeptide: ATP-dependent protease subunit HslV (182 aa).

Residue Thr-10 is part of the active site. 3 residues coordinate Na(+): Ala-166, Cys-169, and Ser-172.

Belongs to the peptidase T1B family. HslV subfamily. As to quaternary structure, a double ring-shaped homohexamer of HslV is capped on each side by a ring-shaped HslU homohexamer. The assembly of the HslU/HslV complex is dependent on binding of ATP.

It is found in the cytoplasm. It carries out the reaction ATP-dependent cleavage of peptide bonds with broad specificity.. Allosterically activated by HslU binding. Functionally, protease subunit of a proteasome-like degradation complex believed to be a general protein degrading machinery. The sequence is that of ATP-dependent protease subunit HslV from Rickettsia typhi (strain ATCC VR-144 / Wilmington).